Reading from the N-terminus, the 304-residue chain is Recombination-associated protein RdgC (304 aa).

Belongs to the RdgC family.

The protein resides in the cytoplasm. Its subcellular location is the nucleoid. May be involved in recombination. This chain is Recombination-associated protein RdgC, found in Shewanella sp. (strain MR-4).